The primary structure comprises 93 residues: Small ribosomal subunit protein uS19 (93 aa).

This sequence belongs to the universal ribosomal protein uS19 family.

Functionally, protein S19 forms a complex with S13 that binds strongly to the 16S ribosomal RNA. In Streptococcus gordonii (strain Challis / ATCC 35105 / BCRC 15272 / CH1 / DL1 / V288), this protein is Small ribosomal subunit protein uS19.